The chain runs to 410 residues: 3-phosphoshikimate 1-carboxyvinyltransferase (410 aa).

3-phosphoshikimate is bound by residues Lys20, Ser21, and Arg25. A phosphoenolpyruvate-binding site is contributed by Lys20. Arg115 provides a ligand contact to phosphoenolpyruvate. Residues Ser157, Ser158, Gln159, Ser183, Asp293, and Lys320 each coordinate 3-phosphoshikimate. Residue Gln159 coordinates phosphoenolpyruvate. Asp293 acts as the Proton acceptor in catalysis. 3 residues coordinate phosphoenolpyruvate: Arg324, Arg365, and Lys391.

Belongs to the EPSP synthase family. Monomer.

Its subcellular location is the cytoplasm. The enzyme catalyses 3-phosphoshikimate + phosphoenolpyruvate = 5-O-(1-carboxyvinyl)-3-phosphoshikimate + phosphate. Its pathway is metabolic intermediate biosynthesis; chorismate biosynthesis. In terms of biological role, catalyzes the transfer of the enolpyruvyl moiety of phosphoenolpyruvate (PEP) to the 5-hydroxyl of shikimate-3-phosphate (S3P) to produce enolpyruvyl shikimate-3-phosphate and inorganic phosphate. The protein is 3-phosphoshikimate 1-carboxyvinyltransferase of Thermoplasma acidophilum (strain ATCC 25905 / DSM 1728 / JCM 9062 / NBRC 15155 / AMRC-C165).